Here is a 312-residue protein sequence, read N- to C-terminus: Short chain dehydrogenase pgmD (312 aa).

The NADP(+) site is built by V46, I47, K171, Y207, K211, and T242. The active-site Proton donor is the Y207. K211 (lowers pKa of active site Tyr) is an active-site residue.

This sequence belongs to the short-chain dehydrogenases/reductases (SDR) family.

The protein operates within pigment biosynthesis. Its pathway is secondary metabolite biosynthesis. Its function is as follows. Short chain dehydrogenase; part of the gene cluster that mediates the biosynthesis of pleosporalin A, ascomycone A, as well as a third cryptic naphthoquinone derived pigment, all responsible for the coloration of conidia. Essential for the production of pleosporalin A, but not the 2 other final products. The pathway begins with the biosynthesis of the cyclized heptaketide 3-acetonyl-1,6,8-trihydroxy-2-naphthaldehyde by the NR-PKS pgmA. The C-6 hydroxyl group is further methylated by the O-methyltransferase pgmB to yield fusarubinaldehyde which is in turn oxidized by the cytochrome P450 monooxygenase pgmC at C-9. The C-1 hydroxyl group is then methylated spontaneously. Although pgmE, pgmD and pgmH are essential for the production of pleosporalin A, it is not the case for the 2 other final products and it remains difficult to assign a specific function to each enzyme. PgmF and pgmG seem not to be involved in pigment biosynthesis although they were regulated by the cluster-specific transcription factor pgmR. In Aspergillus terreus, this protein is Short chain dehydrogenase pgmD.